The following is a 257-amino-acid chain: Pimeloyl-[acyl-carrier protein] methyl ester esterase (257 aa).

The AB hydrolase-1 domain occupies 16-240; that stretch reads LVLIHGWGMN…EQASHAPFIS (225 aa). Substrate contacts are provided by residues tryptophan 22, 82 to 83, and 143 to 147; these read SL and FMALQ. Serine 82 acts as the Nucleophile in catalysis. Catalysis depends on residues aspartate 207 and histidine 235. Residue histidine 235 participates in substrate binding.

This sequence belongs to the AB hydrolase superfamily. Carboxylesterase BioH family. As to quaternary structure, monomer.

Its subcellular location is the cytoplasm. It carries out the reaction 6-carboxyhexanoyl-[ACP] methyl ester + H2O = 6-carboxyhexanoyl-[ACP] + methanol + H(+). Its pathway is cofactor biosynthesis; biotin biosynthesis. In terms of biological role, the physiological role of BioH is to remove the methyl group introduced by BioC when the pimeloyl moiety is complete. It allows to synthesize pimeloyl-ACP via the fatty acid synthetic pathway through the hydrolysis of the ester bonds of pimeloyl-ACP esters. This Aliivibrio fischeri (strain MJ11) (Vibrio fischeri) protein is Pimeloyl-[acyl-carrier protein] methyl ester esterase.